A 363-amino-acid polypeptide reads, in one-letter code: Spermatogenesis-associated protein 22 (363 aa).

Composition is skewed to polar residues over residues 1-12 (MKRSLNENSARS) and 145-157 (SCPMSSGAQQQKQ). Disordered regions lie at residues 1–51 (MKRS…DNYD) and 145–169 (SCPMSSGAQQQKQFGIPEPPNLPRN).

In terms of assembly, component of a multiprotein complex with MEIOB and RPA2. Interacts with MEIOB. Interacts with the complex BRME1:HSF2BP:BRCA2. As to expression, expressed in testis.

Its subcellular location is the chromosome. Functionally, meiosis-specific protein required for homologous recombination in meiosis I. The protein is Spermatogenesis-associated protein 22 (SPATA22) of Macaca fascicularis (Crab-eating macaque).